Here is a 332-residue protein sequence, read N- to C-terminus: GTP 3',8-cyclase (332 aa).

Residues 7-221 (QYERLHDYVR…FDLCKQAGLD (215 aa)) form the Radical SAM core domain. Residue arginine 16 participates in GTP binding. The [4Fe-4S] cluster site is built by cysteine 23 and cysteine 27. Tyrosine 29 contributes to the S-adenosyl-L-methionine binding site. [4Fe-4S] cluster is bound at residue cysteine 30. Arginine 66 contributes to the GTP binding site. Glycine 70 is a binding site for S-adenosyl-L-methionine. Threonine 97 contributes to the GTP binding site. Serine 121 serves as a coordination point for S-adenosyl-L-methionine. Lysine 158 provides a ligand contact to GTP. Methionine 192 provides a ligand contact to S-adenosyl-L-methionine. [4Fe-4S] cluster contacts are provided by cysteine 256 and cysteine 259. 261–263 (RLR) lines the GTP pocket. Cysteine 273 serves as a coordination point for [4Fe-4S] cluster.

This sequence belongs to the radical SAM superfamily. MoaA family. Monomer and homodimer. Requires [4Fe-4S] cluster as cofactor.

The catalysed reaction is GTP + AH2 + S-adenosyl-L-methionine = (8S)-3',8-cyclo-7,8-dihydroguanosine 5'-triphosphate + 5'-deoxyadenosine + L-methionine + A + H(+). It functions in the pathway cofactor biosynthesis; molybdopterin biosynthesis. Functionally, catalyzes the cyclization of GTP to (8S)-3',8-cyclo-7,8-dihydroguanosine 5'-triphosphate. This chain is GTP 3',8-cyclase, found in Limosilactobacillus fermentum (strain NBRC 3956 / LMG 18251) (Lactobacillus fermentum).